The primary structure comprises 157 residues: XylDLEGF operon transcriptional activator 2 (157 aa).

One can recognise an HTH araC/xylS-type domain in the interval 39–140 (ERVVQFIEEN…GELPSDTLSL (102 aa)). 2 consecutive DNA-binding regions (H-T-H motif) follow at residues 56–77 (EQLAELALMSPRSLYTMFEKHT) and 107–130 (ITEVALDYGFLHLGRFAEKYRSTF).

Its subcellular location is the cytoplasm. Its function is as follows. Regulatory protein of the TOL plasmid xyl operons. XylS activates the xylXYZLTEGFJQKIH operon required for the degradation of toluene, m-xylene and p-xylene. This Pseudomonas putida (Arthrobacter siderocapsulatus) protein is XylDLEGF operon transcriptional activator 2 (xylS2).